The chain runs to 401 residues: Phosphoglycerate kinase (401 aa).

Substrate contacts are provided by residues 23 to 25 (DLN), Arg-38, 61 to 64 (HFGR), Arg-120, and Arg-153. Residues Lys-203, Glu-325, and 355 to 358 (GGDT) contribute to the ATP site.

The protein belongs to the phosphoglycerate kinase family. As to quaternary structure, monomer.

It is found in the cytoplasm. It carries out the reaction (2R)-3-phosphoglycerate + ATP = (2R)-3-phospho-glyceroyl phosphate + ADP. Its pathway is carbohydrate degradation; glycolysis; pyruvate from D-glyceraldehyde 3-phosphate: step 2/5. The polypeptide is Phosphoglycerate kinase (Rhizobium johnstonii (strain DSM 114642 / LMG 32736 / 3841) (Rhizobium leguminosarum bv. viciae)).